The following is a 162-amino-acid chain: Troponin C, skeletal muscle (162 aa).

4 consecutive EF-hand domains span residues 17 to 52 (EMIA…LGQN), 53 to 88 (PTKE…QMKE), 93 to 128 (KSEE…TGEH), and 129 to 162 (VTEE…EGVQ). Ca(2+) contacts are provided by aspartate 30, aspartate 32, aspartate 36, glutamate 41, aspartate 66, aspartate 68, serine 70, threonine 72, glutamate 77, aspartate 106, asparagine 108, aspartate 110, glutamate 117, aspartate 142, asparagine 144, aspartate 146, arginine 148, and glutamate 153.

This sequence belongs to the troponin C family.

Its function is as follows. Troponin is the central regulatory protein of striated muscle contraction. Tn consists of three components: Tn-I which is the inhibitor of actomyosin ATPase, Tn-T which contains the binding site for tropomyosin and Tn-C. The binding of calcium to Tn-C abolishes the inhibitory action of Tn on actin filaments. The protein is Troponin C, skeletal muscle (TNNC2) of Meleagris gallopavo (Wild turkey).